A 389-amino-acid polypeptide reads, in one-letter code: Glutamate 5-kinase (389 aa).

K16 lines the ATP pocket. Residues S56, D143, and N155 each contribute to the substrate site. Position 175 to 176 (S175 to D176) interacts with ATP. Positions A281 to P358 constitute a PUA domain.

Belongs to the glutamate 5-kinase family.

It localises to the cytoplasm. It carries out the reaction L-glutamate + ATP = L-glutamyl 5-phosphate + ADP. The protein operates within amino-acid biosynthesis; L-proline biosynthesis; L-glutamate 5-semialdehyde from L-glutamate: step 1/2. Functionally, catalyzes the transfer of a phosphate group to glutamate to form L-glutamate 5-phosphate. This Rhizobium leguminosarum bv. trifolii (strain WSM2304) protein is Glutamate 5-kinase.